Consider the following 584-residue polypeptide: Aspartate--tRNA(Asp/Asn) ligase (584 aa).

Residue glutamate 174 coordinates L-aspartate. An aspartate region spans residues glutamine 198–lysine 201. Residue arginine 220 participates in L-aspartate binding. ATP contacts are provided by residues arginine 220–glutamate 222 and glutamine 229. Histidine 447 lines the L-aspartate pocket. Residue glutamate 480 participates in ATP binding. L-aspartate is bound at residue arginine 487. Glycine 532–arginine 535 contacts ATP.

The protein belongs to the class-II aminoacyl-tRNA synthetase family. Type 1 subfamily. As to quaternary structure, homodimer.

Its subcellular location is the cytoplasm. It carries out the reaction tRNA(Asx) + L-aspartate + ATP = L-aspartyl-tRNA(Asx) + AMP + diphosphate. Its function is as follows. Aspartyl-tRNA synthetase with relaxed tRNA specificity since it is able to aspartylate not only its cognate tRNA(Asp) but also tRNA(Asn). Reaction proceeds in two steps: L-aspartate is first activated by ATP to form Asp-AMP and then transferred to the acceptor end of tRNA(Asp/Asn). The chain is Aspartate--tRNA(Asp/Asn) ligase from Endomicrobium trichonymphae.